Consider the following 136-residue polypeptide: MVESIARVRHIRVTPMKARRVVNMIRGKQAQEALAILKFAPQGASEPVYKLVASAIANARVKADQSNTYLDEQDLYVSRAFVDEGTTLKRFQPRAQGRAFRINKRTSHITVVLATPDEAEAAQPAKKASTAKKASN.

It belongs to the universal ribosomal protein uL22 family. Part of the 50S ribosomal subunit.

In terms of biological role, this protein binds specifically to 23S rRNA; its binding is stimulated by other ribosomal proteins, e.g. L4, L17, and L20. It is important during the early stages of 50S assembly. It makes multiple contacts with different domains of the 23S rRNA in the assembled 50S subunit and ribosome. Its function is as follows. The globular domain of the protein is located near the polypeptide exit tunnel on the outside of the subunit, while an extended beta-hairpin is found that lines the wall of the exit tunnel in the center of the 70S ribosome. The protein is Large ribosomal subunit protein uL22 of Leifsonia xyli subsp. xyli (strain CTCB07).